A 56-amino-acid chain; its full sequence is Large ribosomal subunit protein bL32 (56 aa).

The tract at residues 1–35 is disordered; it reads MAVQQNKPTRSKRGMRRSHDALTATHVSVDKTSGE.

Belongs to the bacterial ribosomal protein bL32 family.

The protein is Large ribosomal subunit protein bL32 of Proteus mirabilis (strain HI4320).